The primary structure comprises 433 residues: UDP-N-acetylmuramoylalanine--D-glutamate ligase (433 aa).

125–131 contacts ATP; the sequence is GTSGKTT.

This sequence belongs to the MurCDEF family.

It localises to the cytoplasm. It catalyses the reaction UDP-N-acetyl-alpha-D-muramoyl-L-alanine + D-glutamate + ATP = UDP-N-acetyl-alpha-D-muramoyl-L-alanyl-D-glutamate + ADP + phosphate + H(+). It participates in cell wall biogenesis; peptidoglycan biosynthesis. Its function is as follows. Cell wall formation. Catalyzes the addition of glutamate to the nucleotide precursor UDP-N-acetylmuramoyl-L-alanine (UMA). The protein is UDP-N-acetylmuramoylalanine--D-glutamate ligase of Nitratidesulfovibrio vulgaris (strain ATCC 29579 / DSM 644 / CCUG 34227 / NCIMB 8303 / VKM B-1760 / Hildenborough) (Desulfovibrio vulgaris).